A 107-amino-acid chain; its full sequence is Flagellar hook-basal body complex protein FliE (107 aa).

It belongs to the FliE family.

The protein localises to the bacterial flagellum basal body. The protein is Flagellar hook-basal body complex protein FliE of Cupriavidus pinatubonensis (strain JMP 134 / LMG 1197) (Cupriavidus necator (strain JMP 134)).